A 108-amino-acid chain; its full sequence is UPF0102 protein SO_0299 (108 aa).

The protein belongs to the UPF0102 family.

The polypeptide is UPF0102 protein SO_0299 (Shewanella oneidensis (strain ATCC 700550 / JCM 31522 / CIP 106686 / LMG 19005 / NCIMB 14063 / MR-1)).